The sequence spans 623 residues: Phosphoglucomutase, chloroplastic (623 aa).

A chloroplast-targeting transit peptide spans 1-63; it reads MTSTYTRFDT…SSSSSSVVAG (63 aa). Residues R88 and S181 each coordinate alpha-D-glucose 1,6-bisphosphate. Catalysis depends on S181, which acts as the Phosphoserine intermediate. 4 residues coordinate Mg(2+): S181, D346, D348, and D350. Residue S181 is modified to Phosphoserine. Alpha-D-glucose 1,6-bisphosphate contacts are provided by D350, R351, T414, E433, S435, and K446.

The protein belongs to the phosphohexose mutase family. Monomer. Mg(2+) serves as cofactor. As to expression, expressed in flowers, siliques and germinating seeds.

Its subcellular location is the plastid. It localises to the chloroplast. It carries out the reaction alpha-D-glucose 1-phosphate = alpha-D-glucose 6-phosphate. The catalysed reaction is O-phospho-L-seryl-[protein] + alpha-D-glucose 1-phosphate = alpha-D-glucose 1,6-bisphosphate + L-seryl-[protein]. The enzyme catalyses alpha-D-glucose 1,6-bisphosphate + L-seryl-[protein] = O-phospho-L-seryl-[protein] + alpha-D-glucose 6-phosphate. Its activity is regulated as follows. Inhibited by the Calvin cycle intermediates fructose-1,6-bisphosphate and ribulose-1,5-bisphosphate. In terms of biological role, catalyzes the reversible isomerization of alpha-D-glucose 1-phosphate to alpha-D-glucose 6-phosphate. The mechanism proceeds via the intermediate compound alpha-D-glucose 1,6-bisphosphate. This enzyme participates in both the breakdown and synthesis of glucose. Factor that affects seed oil content. Accumulated starch in young embryos may play an important role in providing carbon resources for seed storage lipid biosynthesis in oilseed plants. Promotes gravitropic responses, negative in shoots but positive in roots, by facilitating starch granules (statoliths) formation in hypocotyls and roots columella. This Arabidopsis thaliana (Mouse-ear cress) protein is Phosphoglucomutase, chloroplastic.